The chain runs to 60 residues: Large ribosomal subunit protein uL30 (60 aa).

The protein belongs to the universal ribosomal protein uL30 family. Part of the 50S ribosomal subunit.

In Streptococcus mutans serotype c (strain ATCC 700610 / UA159), this protein is Large ribosomal subunit protein uL30.